Consider the following 138-residue polypeptide: ATP synthase epsilon chain, chloroplastic (138 aa).

Belongs to the ATPase epsilon chain family. As to quaternary structure, F-type ATPases have 2 components, CF(1) - the catalytic core - and CF(0) - the membrane proton channel. CF(1) has five subunits: alpha(3), beta(3), gamma(1), delta(1), epsilon(1). CF(0) has three main subunits: a, b and c.

Its subcellular location is the plastid. The protein resides in the chloroplast thylakoid membrane. Its function is as follows. Produces ATP from ADP in the presence of a proton gradient across the membrane. This chain is ATP synthase epsilon chain, chloroplastic, found in Galdieria sulphuraria (Red alga).